The following is a 30-amino-acid chain: Bacteriocin SRCAM 37 (30 aa).

It belongs to the bacteriocin class IIA/YGNGV family.

It is found in the secreted. Its function is as follows. Bacteriocin with antibacterial activity against C.jejuni. The protein is Bacteriocin SRCAM 37 of Paenibacillus polymyxa (Bacillus polymyxa).